We begin with the raw amino-acid sequence, 225 residues long: Phosphatidylserine decarboxylase proenzyme (225 aa).

The active-site Schiff-base intermediate with substrate; via pyruvic acid is the Ser195. The residue at position 195 (Ser195) is a Pyruvic acid (Ser); by autocatalysis.

The protein belongs to the phosphatidylserine decarboxylase family. PSD-A subfamily. As to quaternary structure, heterodimer of a large membrane-associated beta subunit and a small pyruvoyl-containing alpha subunit. It depends on pyruvate as a cofactor. Post-translationally, is synthesized initially as an inactive proenzyme. Formation of the active enzyme involves a self-maturation process in which the active site pyruvoyl group is generated from an internal serine residue via an autocatalytic post-translational modification. Two non-identical subunits are generated from the proenzyme in this reaction, and the pyruvate is formed at the N-terminus of the alpha chain, which is derived from the carboxyl end of the proenzyme. The post-translation cleavage follows an unusual pathway, termed non-hydrolytic serinolysis, in which the side chain hydroxyl group of the serine supplies its oxygen atom to form the C-terminus of the beta chain, while the remainder of the serine residue undergoes an oxidative deamination to produce ammonia and the pyruvoyl prosthetic group on the alpha chain.

The protein localises to the cell membrane. The catalysed reaction is a 1,2-diacyl-sn-glycero-3-phospho-L-serine + H(+) = a 1,2-diacyl-sn-glycero-3-phosphoethanolamine + CO2. Its pathway is phospholipid metabolism; phosphatidylethanolamine biosynthesis; phosphatidylethanolamine from CDP-diacylglycerol: step 2/2. Its function is as follows. Catalyzes the formation of phosphatidylethanolamine (PtdEtn) from phosphatidylserine (PtdSer). This is Phosphatidylserine decarboxylase proenzyme from Gluconobacter oxydans (strain 621H) (Gluconobacter suboxydans).